Reading from the N-terminus, the 459-residue chain is Protein YTP1 (459 aa).

The Extracellular portion of the chain corresponds to 1–6 (MTAANK). Residues 7–27 (NIVFGFSRSISAILLICFFFE) traverse the membrane as a helical segment. Topologically, residues 28 to 59 (KVCGDMEHDMGMDDTSGYTRPEIVQAGSKSFH) are cytoplasmic. The chain crosses the membrane as a helical span at residues 60 to 80 (WLCTLGFLLLLPSVVTCLSFA). The Extracellular portion of the chain corresponds to 81-82 (GR). A helical transmembrane segment spans residues 83–103 (IYSATLLQCTCAVYAFLEAAV). Residues 104–122 (LRFQDNDGVENRTSRGTAW) lie on the Cytoplasmic side of the membrane. Residues 123-143 (FLVGLTWITLFFGGLAGGTGF) form a helical membrane-spanning segment. Residues 144-170 (LVKSKRLQTFISNAGEKRLSYIHRGLS) lie on the Extracellular side of the membrane. Residues 171–191 (FLTVLTGWVKVCLAPVALFGF) traverse the membrane as a helical segment. Residues 192-205 (CREAHTGQCIAHGI) lie on the Cytoplasmic side of the membrane. The helical transmembrane segment at 206 to 226 (MGSAFVLYGFIYVLVLVIPWI) threads the bilayer. The Extracellular segment spans residues 227–266 (RSAQTSYSQDYVDSWVMCIWGVVNTFTEHRWGREGWSVHD). A helical membrane pass occupies residues 267–287 (YQHTFMGIIWWTGGILGIFLS). Residues 288–295 (RNGRRTFV) lie on the Cytoplasmic side of the membrane. A helical membrane pass occupies residues 296–316 (PSLIIIFTGWAMSEHAQHLII). The Extracellular segment spans residues 317-322 (STKVHN). Residues 323–343 (MFGLVLMCGGALRIIEISFLL) traverse the membrane as a helical segment. At 344–351 (RDKRTLDK) the chain is on the cytoplasmic side. The chain crosses the membrane as a helical span at residues 352–372 (IHSFQYLAPFCLVCSGLLFMG). The Extracellular portion of the chain corresponds to 373–389 (ANEEQLILVLRLGGDHS). A helical membrane pass occupies residues 390–410 (AYVLIIVSGAFLVYFWMIACL). The Cytoplasmic segment spans residues 411–459 (EFYLYLLEKGKQGFLPKSYELEEENNNVSFELDNISNEDVDEDTTPFNV).

The protein localises to the membrane. The chain is Protein YTP1 (YTP1) from Saccharomyces cerevisiae (strain ATCC 204508 / S288c) (Baker's yeast).